An 831-amino-acid polypeptide reads, in one-letter code: Probable DNA-directed RNA polymerase (831 aa).

Residues Asp490, Lys560, and Asp738 contribute to the active site.

It belongs to the phage and mitochondrial RNA polymerase family.

It is found in the mitochondrion. The catalysed reaction is RNA(n) + a ribonucleoside 5'-triphosphate = RNA(n+1) + diphosphate. DNA-dependent RNA polymerase catalyzes the transcription of DNA into RNA using the four ribonucleoside triphosphates as substrates. This chain is Probable DNA-directed RNA polymerase, found in Gelasinospora sp. (strain G114).